The primary structure comprises 189 residues: Putative manganese efflux pump MntP (189 aa).

Helical transmembrane passes span 6–26 (IFGI…AAGV), 39–59 (LAWH…YAGL), 71–91 (WIAF…SFDA), 106–126 (LVLL…SLSV), 131–151 (VWMP…GGLM), and 169–189 (VGAG…GVFY).

This sequence belongs to the MntP (TC 9.B.29) family.

It is found in the cell inner membrane. In terms of biological role, probably functions as a manganese efflux pump. In Desulfosudis oleivorans (strain DSM 6200 / JCM 39069 / Hxd3) (Desulfococcus oleovorans), this protein is Putative manganese efflux pump MntP.